We begin with the raw amino-acid sequence, 103 residues long: Putative glutaredoxin-C12 (103 aa).

Positions 1-102 constitute a Glutaredoxin domain; it reads MERVRDLASE…QMLKASNAIW (102 aa). C21 and C24 are joined by a disulfide.

The protein belongs to the glutaredoxin family. CC-type subfamily.

It is found in the cytoplasm. Has a glutathione-disulfide oxidoreductase activity in the presence of NADPH and glutathione reductase. Reduces low molecular weight disulfides and proteins. In Arabidopsis thaliana (Mouse-ear cress), this protein is Putative glutaredoxin-C12 (GRXC12).